Here is a 96-residue protein sequence, read N- to C-terminus: Keratin-associated protein 12-1 (96 aa).

14 consecutive repeat copies span residues 10–14 (CQPAC), 15–19 (CAPSP), 24–28 (CYIPV), 30–34 (CQSSV), 35–39 (CVPVS), 45–49 (CVPVR), 50–54 (CQSSV), 55–59 (CVPVS), 60–64 (CRPVV), 70–74 (CQSSG), 75–79 (CCQPS), 80–84 (CTSVL), 85–89 (CRPIS), and 90–94 (CSTPS). Residues 10 to 94 (CQPACCAPSP…CRPISCSTPS (85 aa)) form a 14 X 5 AA approximate repeats region.

This sequence belongs to the KRTAP type 12 family. Interacts with hair keratins. In terms of tissue distribution, restricted to a narrow region of the hair fiber cuticle, lying approximately 20 cell layers above the apex of the dermal papilla of the hair root; not detected in any other tissues.

In terms of biological role, in the hair cortex, hair keratin intermediate filaments are embedded in an interfilamentous matrix, consisting of hair keratin-associated proteins (KRTAP), which are essential for the formation of a rigid and resistant hair shaft through their extensive disulfide bond cross-linking with abundant cysteine residues of hair keratins. The matrix proteins include the high-sulfur and high-glycine-tyrosine keratins. The sequence is that of Keratin-associated protein 12-1 (KRTAP12-1) from Homo sapiens (Human).